The following is a 512-amino-acid chain: Tyrosine-protein kinase Lyn (512 aa).

The segment at 1–62 (MGCIKSKGKD…GQRFQTKDPE (62 aa)) is disordered. G2 carries the N-myristoyl glycine lipid modification. C3 is lipidated: S-palmitoyl cysteine. Phosphoserine occurs at positions 11 and 13. The region spanning 63 to 123 (EQGDIVVALY…PSNYVAKLNT (61 aa)) is the SH3 domain. Residues 129–226 (WFFKDITRKD…GLCRRLEKAC (98 aa)) form the SH2 domain. Y193 is modified (phosphotyrosine). Residue S228 is modified to Phosphoserine. Residues 247–501 (IKLVKRLGAG…YLQSVLDDFY (255 aa)) form the Protein kinase domain. ATP-binding positions include 253–261 (LGAGQFGEV) and K275. Phosphotyrosine is present on residues Y306 and Y316. D367 acts as the Proton acceptor in catalysis. Y397 bears the Phosphotyrosine; by autocatalysis mark. A phosphotyrosine mark is found at Y460 and Y473. Y508 is modified (phosphotyrosine; by autocatalysis, CSK and MATK).

The protein belongs to the protein kinase superfamily. Tyr protein kinase family. SRC subfamily. In terms of assembly, interacts with TEC. Interacts (via SH2 domain) with FLT3 (tyrosine phosphorylated). Interacts with LIME1 and with CD79A upon activation of the B-cell antigen receptor. Interacts with the B-cell receptor complex. Interacts with phosphorylated THEMIS2. Interacts with EPOR. Interacts with MS4A2/FCER1B. Interaction (via the SH2 and SH3 domains) with MUC1 is stimulated by IL7 and the subsequent phosphorylation increases the binding between MUC1 and CTNNB1/beta-catenin. Interacts with ADAM15. Interacts with NDFIP2 and more weakly with NDFIP1. Interacts with FASLG. Interacts with KIT. Interacts with HCLS1. Interacts with FCGR2B. Interacts with FCGR1A; the interaction may be indirect. Interacts with CD19, CD22, CD79A and CD79B. Interacts (via SH3 domain) with CBLC, PPP1R15A and PDE4A. Interacts with TGFB1I1. Interacts (via SH3 domain) with PIK3R1, the regulatory subunit of phosphatidylinositol 3-kinase; this interaction enhances phosphatidylinositol 3-kinase activity. Interacts with CSF2RB, the common subunit of the IL3, IL5 and CSF2 receptors. Interacts with PAG1; identified in a complex with PAG1 and STAT3. Interacts with ABL1. Interacts with PTPN6/SHP-1. Interacts (via SH3 domain) with SCIMP (via proline-rich region). This interaction facilitates the phosphorylation of SCIMP on 'Tyr-107', which enhances binding of SCIMP to TLR4, and consequently the phosphorylation of TLR4 in response to stimulation by lipopolysaccharide in macrophages. Interacts with LPXN (via LD motif 3) and the interaction is induced upon B-cell antigen receptor (BCR) activation. Interacts (via SH3-domain) with ANKRD54 (via ankyrin repeat region) in an activation-independent status of LYN. Forms a multiprotein complex with ANKRD54 and HCLS1. Interacts (via SH2 and SH3 domains) with UNC119; leading to LYN activation. Interacts with CD36. Interacts with LYN. Interacts with SKAP1 and FYB1; this interaction promotes the phosphorylation of CLNK. Interacts with BCAR1/CAS and NEDD9/HEF1. As to quaternary structure, (Microbial infection) Interacts with Epstein-Barr virus LMP2A. (Microbial infection) Interacts with Herpes virus saimiri tyrosine kinase interacting protein (Tip). In terms of processing, ubiquitinated by CBL, leading to its degradation. Ubiquitination is SH3-dependent. Autophosphorylated. Phosphorylated on tyrosine residues in response to KIT signaling. Phosphorylation at Tyr-397 is required for optimal activity. Phosphorylation at Tyr-508 inhibits kinase activity. Phosphorylated at Tyr-508 by CSK. Dephosphorylated by PTPRC/CD45. Becomes rapidly phosphorylated upon activation of the B-cell receptor and the immunoglobulin receptor FCGR1A. Phosphorylated in response to ITGB1 in B-cells. As to expression, detected in monocytes (at protein level). Detected in placenta, and in fetal brain, lung, liver and kidney. Widely expressed in a variety of organs, tissues, and cell types such as epidermoid, hematopoietic, and neuronal cells. Expressed in primary neuroblastoma tumors.

It is found in the cell membrane. Its subcellular location is the nucleus. It localises to the cytoplasm. The protein localises to the perinuclear region. The protein resides in the golgi apparatus. It is found in the membrane. It catalyses the reaction L-tyrosyl-[protein] + ATP = O-phospho-L-tyrosyl-[protein] + ADP + H(+). With respect to regulation, subject to autoinhibition, mediated by intramolecular interactions between the SH2 domain and the C-terminal phosphotyrosine. Phosphorylation at Tyr-397 is required for optimal activity. Phosphorylated by CSK at Tyr-508; phosphorylation at Tyr-508 inhibits kinase activity. Kinase activity is modulated by dephosphorylation by PTPRC/CD45. Inhibited by Dasatinib, PP2, and SU6656. Its function is as follows. Non-receptor tyrosine-protein kinase that transmits signals from cell surface receptors and plays an important role in the regulation of innate and adaptive immune responses, hematopoiesis, responses to growth factors and cytokines, integrin signaling, but also responses to DNA damage and genotoxic agents. Functions primarily as negative regulator, but can also function as activator, depending on the context. Required for the initiation of the B-cell response, but also for its down-regulation and termination. Plays an important role in the regulation of B-cell differentiation, proliferation, survival and apoptosis, and is important for immune self-tolerance. Acts downstream of several immune receptors, including the B-cell receptor, CD79A, CD79B, CD5, CD19, CD22, FCER1, FCGR2, FCGR1A, TLR2 and TLR4. Plays a role in the inflammatory response to bacterial lipopolysaccharide. Mediates the responses to cytokines and growth factors in hematopoietic progenitors, platelets, erythrocytes, and in mature myeloid cells, such as dendritic cells, neutrophils and eosinophils. Acts downstream of EPOR, KIT, MPL, the chemokine receptor CXCR4, as well as the receptors for IL3, IL5 and CSF2. Plays an important role in integrin signaling. Regulates cell proliferation, survival, differentiation, migration, adhesion, degranulation, and cytokine release. Involved in the regulation of endothelial activation, neutrophil adhesion and transendothelial migration. Down-regulates signaling pathways by phosphorylation of immunoreceptor tyrosine-based inhibitory motifs (ITIM), that then serve as binding sites for phosphatases, such as PTPN6/SHP-1, PTPN11/SHP-2 and INPP5D/SHIP-1, that modulate signaling by dephosphorylation of kinases and their substrates. Phosphorylates LIME1 in response to CD22 activation. Phosphorylates BTK, CBL, CD5, CD19, CD72, CD79A, CD79B, CSF2RB, DOK1, HCLS1, LILRB3/PIR-B, MS4A2/FCER1B, SYK and TEC. Promotes phosphorylation of SIRPA, PTPN6/SHP-1, PTPN11/SHP-2 and INPP5D/SHIP-1. Mediates phosphorylation of the BCR-ABL fusion protein. Required for rapid phosphorylation of FER in response to FCER1 activation. Mediates KIT phosphorylation. Acts as an effector of EPOR (erythropoietin receptor) in controlling KIT expression and may play a role in erythroid differentiation during the switch between proliferation and maturation. Depending on the context, activates or inhibits several signaling cascades. Regulates phosphatidylinositol 3-kinase activity and AKT1 activation. Regulates activation of the MAP kinase signaling cascade, including activation of MAP2K1/MEK1, MAPK1/ERK2, MAPK3/ERK1, MAPK8/JNK1 and MAPK9/JNK2. Mediates activation of STAT5A and/or STAT5B. Phosphorylates LPXN on 'Tyr-72'. Kinase activity facilitates TLR4-TLR6 heterodimerization and signal initiation. Phosphorylates SCIMP on 'Tyr-107'; this enhances binding of SCIMP to TLR4, promoting the phosphorylation of TLR4, and a selective cytokine response to lipopolysaccharide in macrophages. Phosphorylates CLNK. Phosphorylates BCAR1/CAS and NEDD9/HEF1. In Homo sapiens (Human), this protein is Tyrosine-protein kinase Lyn (LYN).